Reading from the N-terminus, the 648-residue chain is Primary amine oxidase (648 aa).

The propeptide occupies Met1 to Ala9. Residue Ala299 to Met310 participates in substrate binding. The Proton acceptor role is filled by Asp301. A disulfide bridge links Cys320 with Cys346. Val382 to Tyr387 contributes to the substrate binding site. Tyr385 (schiff-base intermediate with substrate; via topaquinone) is an active-site residue. The residue at position 385 (Tyr385) is a 2',4',5'-topaquinone. Cu cation-binding residues include His436 and His438. Residues Asp445, Phe446, and Asp584 each contribute to the Mn(2+) site. Cu cation is bound at residue His595.

Belongs to the copper/topaquinone oxidase family. As to quaternary structure, homodimer. Requires Cu cation as cofactor. It depends on Zn(2+) as a cofactor. L-topaquinone serves as cofactor. Mn(2+) is required as a cofactor. Topaquinone (TPQ) is generated by copper-dependent autoxidation of a specific tyrosyl residue.

The catalysed reaction is a primary methyl amine + O2 + H2O = an aldehyde + H2O2 + NH4(+). The exact function of MaoXI is not known. The sequence is that of Primary amine oxidase (maoI) from Arthrobacter sp. (strain P1).